Reading from the N-terminus, the 192-residue chain is uncharacterized protein (192 aa).

It to A.aeolicus AQ_054.

This is an uncharacterized protein from Thermotoga maritima (strain ATCC 43589 / DSM 3109 / JCM 10099 / NBRC 100826 / MSB8).